The sequence spans 147 residues: TRAP-T-associated universal stress protein TeaD (147 aa).

Residues 8–10 (PVD), valine 38, 117–122 (GAQGTN), and 131–133 (SVA) contribute to the ATP site.

It belongs to the universal stress protein A family. Homodimer or homotetramer; in equilibrium. The dimer/tetramer ratio is ATP-dependent. ATP stabilizes dimer-dimer complexes, with one ATP molecule bound to each monomer.

The protein localises to the cytoplasm. Functionally, ATP-binding protein that negatively regulates activity of the tripartite ATP-independent periplasmic (TRAP) ectoine transport system TeaABC. May regulate uptake according to the ATP status of the cell. This is TRAP-T-associated universal stress protein TeaD (teaD) from Halomonas elongata (strain ATCC 33173 / DSM 2581 / NBRC 15536 / NCIMB 2198 / 1H9).